The sequence spans 135 residues: MADITVVNDTGELYNVINQKKSEGYLESELTIISKSKLHLNDLHDSEISLISTSGTFSDKMTKLLTGEDGEHAVLSRYNLAPDELEKYKQLILDDKMLVVGVRDHSSHQEVLENNSAYEEVDITHFAEASKGPKA.

The protein belongs to the UPF0355 family.

This Staphylococcus aureus (strain MRSA252) protein is UPF0355 protein MRSA252.